Here is a 424-residue protein sequence, read N- to C-terminus: Dihydroorotase (424 aa).

Residues histidine 61 and histidine 63 each coordinate Zn(2+). Residues 63 to 65 and asparagine 95 each bind substrate; that span reads HLR. The Zn(2+) site is built by aspartate 153, histidine 180, and histidine 233. Asparagine 279 lines the substrate pocket. Aspartate 306 contributes to the Zn(2+) binding site. Aspartate 306 is a catalytic residue. Substrate is bound at residue histidine 310.

It belongs to the metallo-dependent hydrolases superfamily. DHOase family. Class I DHOase subfamily. Zn(2+) serves as cofactor.

The enzyme catalyses (S)-dihydroorotate + H2O = N-carbamoyl-L-aspartate + H(+). Its pathway is pyrimidine metabolism; UMP biosynthesis via de novo pathway; (S)-dihydroorotate from bicarbonate: step 3/3. Catalyzes the reversible cyclization of carbamoyl aspartate to dihydroorotate. The protein is Dihydroorotase of Pelobacter propionicus (strain DSM 2379 / NBRC 103807 / OttBd1).